The following is a 376-amino-acid chain: Proteasome-interacting protein CIC1 (376 aa).

2 disordered regions span residues 1 to 29 (MAKK…KKSS) and 356 to 376 (RSSS…KAKS). Positions 310-376 (ETHEDDMVTI…ESEAVKKAKS (67 aa)) are required for interaction with CDC4. The span at 357-376 (SSSELEKESSESEAVKKAKS) shows a compositional bias: basic and acidic residues.

As to quaternary structure, interacts with CDC4, PRE4, PRE6, RPT1 and SCL1 as part of the fully assembled 26S proteasome. Interacts with pre-ribosomal particles constituent NOP7.

It is found in the nucleus. It localises to the nucleolus. Its function is as follows. An adapter protein that specifically links the 26S proteasome to its substrate CDC4 which is one of the substrate recognition subunits of the SCF E3 ubiquitin ligase complex. Required for turnover of cell cycle regulatory proteins CDC4 and GRR1. Required for synthesis and nuclear export of 60S ribosomal subunits. Required for vegetative growth. The sequence is that of Proteasome-interacting protein CIC1 (CIC1) from Saccharomyces cerevisiae (strain ATCC 204508 / S288c) (Baker's yeast).